We begin with the raw amino-acid sequence, 139 residues long: Peptide methionine sulfoxide reductase MsrB (139 aa).

The MsrB domain maps to 9–131 (TPSDNTEMTE…NSASLSFIDD (123 aa)). Zn(2+) contacts are provided by C48, C51, C97, and C100. C120 functions as the Nucleophile in the catalytic mechanism.

The protein belongs to the MsrB Met sulfoxide reductase family. Zn(2+) is required as a cofactor.

The catalysed reaction is L-methionyl-[protein] + [thioredoxin]-disulfide + H2O = L-methionyl-(R)-S-oxide-[protein] + [thioredoxin]-dithiol. The sequence is that of Peptide methionine sulfoxide reductase MsrB from Pectobacterium atrosepticum (strain SCRI 1043 / ATCC BAA-672) (Erwinia carotovora subsp. atroseptica).